The primary structure comprises 268 residues: Tryptophan synthase alpha chain (268 aa).

Catalysis depends on proton acceptor residues Glu49 and Asp60.

The protein belongs to the TrpA family. In terms of assembly, tetramer of two alpha and two beta chains.

It carries out the reaction (1S,2R)-1-C-(indol-3-yl)glycerol 3-phosphate + L-serine = D-glyceraldehyde 3-phosphate + L-tryptophan + H2O. It functions in the pathway amino-acid biosynthesis; L-tryptophan biosynthesis; L-tryptophan from chorismate: step 5/5. The alpha subunit is responsible for the aldol cleavage of indoleglycerol phosphate to indole and glyceraldehyde 3-phosphate. The chain is Tryptophan synthase alpha chain from Shigella dysenteriae serotype 1 (strain Sd197).